The sequence spans 418 residues: Tyrosine--tRNA ligase (418 aa).

Tyr-34 lines the L-tyrosine pocket. Residues Pro-39–His-48 carry the 'HIGH' region motif. L-tyrosine is bound by residues Tyr-169 and Gln-173. Positions Lys-229–Ser-233 match the 'KMSKS' region motif. Position 232 (Lys-232) interacts with ATP. The 67-residue stretch at Leu-352 to Tyr-418 folds into the S4 RNA-binding domain.

The protein belongs to the class-I aminoacyl-tRNA synthetase family. TyrS type 1 subfamily. Homodimer.

The protein resides in the cytoplasm. It carries out the reaction tRNA(Tyr) + L-tyrosine + ATP = L-tyrosyl-tRNA(Tyr) + AMP + diphosphate + H(+). Its function is as follows. Catalyzes the attachment of tyrosine to tRNA(Tyr) in a two-step reaction: tyrosine is first activated by ATP to form Tyr-AMP and then transferred to the acceptor end of tRNA(Tyr). In Streptococcus equi subsp. equi (strain 4047), this protein is Tyrosine--tRNA ligase.